The chain runs to 122 residues: Biogenesis of lysosome-related organelles complex 1 subunit CNL1 (122 aa).

Positions 1–10 (MQDNSSHSRE) are enriched in basic and acidic residues. The disordered stretch occupies residues 1–21 (MQDNSSHSRESASAGDDPLGI). A coiled-coil region spans residues 63–95 (ENTIDKNIAKFKELLEKCDTLENHYEMLNQLAI).

The protein belongs to the BLOC1S4 family. As to quaternary structure, component of the biogenesis of lysosome-related organelles complex-1 (BLOC-1) composed of at least BLI1, BLS1, CNL1, KXD1, SNN1 and VAB2.

Its subcellular location is the cytoplasm. Its function is as follows. Component of the biogenesis of lysosome-related organelles complex-1 (BLOC-1), a complex that is involved in endosomal cargo sorting. The protein is Biogenesis of lysosome-related organelles complex 1 subunit CNL1 (CLN1) of Saccharomyces cerevisiae (strain Lalvin QA23) (Baker's yeast).